Here is a 313-residue protein sequence, read N- to C-terminus: Porphobilinogen deaminase (313 aa).

C242 carries the post-translational modification S-(dipyrrolylmethanemethyl)cysteine.

It belongs to the HMBS family. In terms of assembly, monomer. Requires dipyrromethane as cofactor.

The enzyme catalyses 4 porphobilinogen + H2O = hydroxymethylbilane + 4 NH4(+). It participates in porphyrin-containing compound metabolism; protoporphyrin-IX biosynthesis; coproporphyrinogen-III from 5-aminolevulinate: step 2/4. Its function is as follows. Tetrapolymerization of the monopyrrole PBG into the hydroxymethylbilane pre-uroporphyrinogen in several discrete steps. The sequence is that of Porphobilinogen deaminase from Klebsiella pneumoniae subsp. pneumoniae (strain ATCC 700721 / MGH 78578).